Here is a 524-residue protein sequence, read N- to C-terminus: 5'-AMP-activated protein kinase subunit gamma-2 (524 aa).

A disordered region spans residues 1-178; that stretch reads MPLLDGDLEG…TRPPLASPTH (178 aa). Residues Ser21, Ser27, Ser29, Ser46, Ser94, Ser99, Ser117, and Ser118 each carry the phosphoserine modification. Positions 112–123 are enriched in low complexity; that stretch reads TSGLSSSPSTPT. Phosphothreonine is present on Thr121. The segment covering 135–145 has biased composition (basic and acidic residues); it reads SYKHEPERLEN. A compositionally biased stretch (polar residues) spans 148-168; the sequence is YASSSPPDTGQRFCPSSFQSP. Residue Ser152 is modified to Phosphoserine. CBS domains follow at residues 230–290, 312–370, and 385–447; these read PTSS…KSPM, TFKP…MSDM, and IGTY…NLDI. ADP is bound by residues Arg257, 272-277, Val317, 338-339, and Lys357; these read MLTITD and HR. AMP contacts are provided by residues Arg257, 272 to 277, Val317, His338, 338 to 339, Lys357, Thr387, Ala392, 413 to 414, 429 to 432, Arg456, His485, 485 to 486, and 501 to 504; these read MLTITD, HR, SA, SKFD, and SLSD. Residues Arg257, 272 to 277, Val317, 338 to 339, Arg339, and Lys357 each bind ATP; these read MLTITD and HR. An AMPK pseudosubstrate motif is present at residues 325-346; it reads LLDAVYSLIKNKIHRLPVIDPI. ADP contacts are provided by residues 429 to 432, Arg456, and 485 to 486; these read SKFD and HR. ATP is bound by residues 429–432, Arg456, and 485–486; these read SKFD and HR. A CBS 4 domain is found at 459 to 517; sequence YFEGVVKCNKLEILETIVDRIVRAEVHRLVVANEADSIVGIISLSDILQALILTPAGAK.

This sequence belongs to the 5'-AMP-activated protein kinase gamma subunit family. As to quaternary structure, AMPK is a heterotrimer of an alpha catalytic subunit (PRKAA1 or PRKAA2), a beta (PRKAB1 or PRKAB2) and a gamma non-catalytic subunits (PRKAG1, PRKAG2 or PRKAG3). Interacts with FNIP1 and FNIP2. Post-translationally, phosphorylated by ULK1; leading to negatively regulate AMPK activity and suggesting the existence of a regulatory feedback loop between ULK1 and AMPK. In terms of processing, glycosylated; O-GlcNAcylated by OGT, promoting the AMP-activated protein kinase (AMPK) activity.

AMP/ATP-binding subunit of AMP-activated protein kinase (AMPK), an energy sensor protein kinase that plays a key role in regulating cellular energy metabolism. In response to reduction of intracellular ATP levels, AMPK activates energy-producing pathways and inhibits energy-consuming processes: inhibits protein, carbohydrate and lipid biosynthesis, as well as cell growth and proliferation. AMPK acts via direct phosphorylation of metabolic enzymes, and by longer-term effects via phosphorylation of transcription regulators. Also acts as a regulator of cellular polarity by remodeling the actin cytoskeleton; probably by indirectly activating myosin. Gamma non-catalytic subunit mediates binding to AMP, ADP and ATP, leading to activate or inhibit AMPK: AMP-binding results in allosteric activation of alpha catalytic subunit (PRKAA1 or PRKAA2) both by inducing phosphorylation and preventing dephosphorylation of catalytic subunits. ADP also stimulates phosphorylation, without stimulating already phosphorylated catalytic subunit. ATP promotes dephosphorylation of catalytic subunit, rendering the AMPK enzyme inactive. This is 5'-AMP-activated protein kinase subunit gamma-2 (PRKAG2) from Pongo abelii (Sumatran orangutan).